The sequence spans 163 residues: MTALRDYVKSFLLVELLQGLRLTGKHFLSRSVTLEYPEEKTPKSPRFRGMHALRRYPNGEERCIACKLCEAVCPALAITIEAGPREDDGTRRTTLYEIDMFKCIYCGFCEESCPVDSIVETREHEYHMEHREERVFDKARLLANGDKYEAQIAADRAADAPYR.

4Fe-4S ferredoxin-type domains follow at residues 53–83 (LRRYPNGEERCIACKLCEAVCPALAITIEAG) and 94–123 (TLYEIDMFKCIYCGFCEESCPVDSIVETRE). The [4Fe-4S] cluster site is built by cysteine 63, cysteine 66, cysteine 69, cysteine 73, cysteine 103, cysteine 106, cysteine 109, and cysteine 113.

Belongs to the complex I 23 kDa subunit family. NDH-1 is composed of 14 different subunits. Subunits NuoA, H, J, K, L, M, N constitute the membrane sector of the complex. Requires [4Fe-4S] cluster as cofactor.

Its subcellular location is the cell inner membrane. It carries out the reaction a quinone + NADH + 5 H(+)(in) = a quinol + NAD(+) + 4 H(+)(out). Functionally, NDH-1 shuttles electrons from NADH, via FMN and iron-sulfur (Fe-S) centers, to quinones in the respiratory chain. The immediate electron acceptor for the enzyme in this species is believed to be ubiquinone. Couples the redox reaction to proton translocation (for every two electrons transferred, four hydrogen ions are translocated across the cytoplasmic membrane), and thus conserves the redox energy in a proton gradient. This chain is NADH-quinone oxidoreductase subunit I, found in Alkalilimnicola ehrlichii (strain ATCC BAA-1101 / DSM 17681 / MLHE-1).